We begin with the raw amino-acid sequence, 2092 residues long: Nonribosomal peptide synthetase echPS (2092 aa).

The adenylation 1 stretch occupies residues 13–406 (FSQRCCQNPD…GRRDRVTKIR (394 aa)). The region spanning 524–600 (SGPLTIGQAI…SLIEKSRHET (77 aa)) is the Carrier 1 domain. Ser561 bears the O-(pantetheine 4'-phosphoryl)serine mark. Residues 596–626 (SRHETEDTPDSSAFATRTPEESSMPTQGPVT) form a disordered region. A compositionally biased stretch (polar residues) spans 605 to 624 (DSSAFATRTPEESSMPTQGP). The segment at 624–1017 (PVTPLQKRMV…YTSLLDAFLD (394 aa)) is condensation 1. An adenylation 2 region spans residues 1068 to 1446 (ASLYPTHVAV…GRKDRQVKVR (379 aa)). One can recognise a Carrier 2 domain in the interval 1544–1622 (IKTTHLEKLI…DLVILVAQQQ (79 aa)). Position 1582 is an O-(pantetheine 4'-phosphoryl)serine (Ser1582). The interval 1663–2047 (SQSQSTFNVS…EALLLECFRI (385 aa)) is condensation 2.

This sequence belongs to the NRP synthetase family. It depends on pantetheine 4'-phosphate as a cofactor.

The catalysed reaction is L-tryptophan + L-alanine + 2 ATP = cyclo(L-tryptophyl-L-alanyl) + 2 ADP + 2 phosphate + 2 H(+). It functions in the pathway secondary metabolite biosynthesis. It participates in alkaloid biosynthesis. In terms of biological role, nonribosomal peptide synthetase; part of the gene cluster that mediates the biosynthesis of echinulin family alkaloid. The pathway begins with the biosynthesis of the cyclic dipeptide cyclo-L-Trp-L-Ala (cyclo-TA) by the NRPS echPS via condensation of L-alanine and L-tryptophan. The prenyltransferase echPT1 then catalyzes the first prenylation step, a reverse prenylation reaction at C2, to yield preechinulin. Preechinulin is the substrate of the cytochrome P450 monooxygenase echP450 that catalyzes the formation of the double bond between C10 and C11 to produce neoechulin A. The unique prenyltransferase echPT2 functions as a competitive enzyme with echP450 for preechinulin metabolization and uses preechinulin for effective regiospecific prenylations. Preechinulin is prenylated by echPT2 at C5 or C7. C7-prenylation leads to accumulation of tardioxopiperazine B without further modification by echPT2. In contrast, the C5-prenylated tardioxopiperazine A can be prenylated again by echPT2, predominantly at C7 to form echinulin or less frequently at C4 to give variecolorin L. EchPT2 also accepts neoechilunin A to produce varlecolorin G (prenylation at C5) or isoechinulin A (prenylation at C7). EchPT2 further converts isoechinulin A into dehydroechinulin. Moreover, a yet unidentified enzyme can also convert neoechilunin A into neoechilunin B by introducing a double bond between positions C14 and C17 and thus provides a further substrate to echPT2 for C5 and C7 prenylation. The polypeptide is Nonribosomal peptide synthetase echPS (Aspergillus ruber (strain CBS 135680)).